Consider the following 411-residue polypeptide: LL-diaminopimelate aminotransferase (411 aa).

Substrate contacts are provided by Tyr-15 and Gly-42. Pyridoxal 5'-phosphate is bound by residues Tyr-72, 108-109 (AK), Tyr-132, Asn-187, Tyr-218, and 246-248 (SFS). Residues Lys-109, Tyr-132, and Asn-187 each contribute to the substrate site. Lys-249 is subject to N6-(pyridoxal phosphate)lysine. Pyridoxal 5'-phosphate-binding residues include Arg-257 and Asn-292. Substrate-binding residues include Asn-292 and Arg-388.

It belongs to the class-I pyridoxal-phosphate-dependent aminotransferase family. LL-diaminopimelate aminotransferase subfamily. As to quaternary structure, homodimer. Requires pyridoxal 5'-phosphate as cofactor.

It carries out the reaction (2S,6S)-2,6-diaminopimelate + 2-oxoglutarate = (S)-2,3,4,5-tetrahydrodipicolinate + L-glutamate + H2O + H(+). Its pathway is amino-acid biosynthesis; L-lysine biosynthesis via DAP pathway; LL-2,6-diaminopimelate from (S)-tetrahydrodipicolinate (aminotransferase route): step 1/1. Involved in the synthesis of meso-diaminopimelate (m-DAP or DL-DAP), required for both lysine and peptidoglycan biosynthesis. Catalyzes the direct conversion of tetrahydrodipicolinate to LL-diaminopimelate. The protein is LL-diaminopimelate aminotransferase of Rippkaea orientalis (strain PCC 8801 / RF-1) (Cyanothece sp. (strain PCC 8801)).